We begin with the raw amino-acid sequence, 252 residues long: Imidazole glycerol phosphate synthase subunit HisF (252 aa).

Catalysis depends on residues Asp-11 and Asp-130.

This sequence belongs to the HisA/HisF family. In terms of assembly, heterodimer of HisH and HisF.

It is found in the cytoplasm. It catalyses the reaction 5-[(5-phospho-1-deoxy-D-ribulos-1-ylimino)methylamino]-1-(5-phospho-beta-D-ribosyl)imidazole-4-carboxamide + L-glutamine = D-erythro-1-(imidazol-4-yl)glycerol 3-phosphate + 5-amino-1-(5-phospho-beta-D-ribosyl)imidazole-4-carboxamide + L-glutamate + H(+). Its pathway is amino-acid biosynthesis; L-histidine biosynthesis; L-histidine from 5-phospho-alpha-D-ribose 1-diphosphate: step 5/9. In terms of biological role, IGPS catalyzes the conversion of PRFAR and glutamine to IGP, AICAR and glutamate. The HisF subunit catalyzes the cyclization activity that produces IGP and AICAR from PRFAR using the ammonia provided by the HisH subunit. The sequence is that of Imidazole glycerol phosphate synthase subunit HisF from Hydrogenobaculum sp. (strain Y04AAS1).